A 207-amino-acid chain; its full sequence is ATP synthase subunit b (207 aa).

An N-terminal signal peptide occupies residues 1 to 27; that stretch reads MKLRATFVFKTTLVALSFALFALFLVS. The N-palmitoyl cysteine moiety is linked to residue Cys-28. Cys-28 is lipidated: S-diacylglycerol cysteine. The chain crosses the membrane as a helical span at residues 49 to 69; it reads WVFLAHLLAFVILLFLLLFLF.

The protein belongs to the ATPase B chain family. In terms of assembly, F-type ATPases have 2 components, F(1) - the catalytic core - and F(0) - the membrane proton channel. F(1) has five subunits: alpha(3), beta(3), gamma(1), delta(1), epsilon(1). F(0) has three main subunits: a(1), b(2) and c(10-14). The alpha and beta chains form an alternating ring which encloses part of the gamma chain. F(1) is attached to F(0) by a central stalk formed by the gamma and epsilon chains, while a peripheral stalk is formed by the delta and b chains.

The protein resides in the cell membrane. F(1)F(0) ATP synthase produces ATP from ADP in the presence of a proton or sodium gradient. F-type ATPases consist of two structural domains, F(1) containing the extramembraneous catalytic core and F(0) containing the membrane proton channel, linked together by a central stalk and a peripheral stalk. During catalysis, ATP synthesis in the catalytic domain of F(1) is coupled via a rotary mechanism of the central stalk subunits to proton translocation. Functionally, component of the F(0) channel, it forms part of the peripheral stalk, linking F(1) to F(0). The polypeptide is ATP synthase subunit b (Mycoplasma pneumoniae (strain ATCC 29342 / M129 / Subtype 1) (Mycoplasmoides pneumoniae)).